A 631-amino-acid chain; its full sequence is Phosphomethylpyrimidine synthase (631 aa).

Substrate is bound by residues Asn239, Met268, Tyr297, His333, Ser353–Gly355, Asp394–Arg397, and Glu433. His437 contributes to the Zn(2+) binding site. Substrate is bound at residue Tyr460. His501 provides a ligand contact to Zn(2+). Cys581, Cys584, and Cys589 together coordinate [4Fe-4S] cluster.

The protein belongs to the ThiC family. Homodimer. [4Fe-4S] cluster serves as cofactor.

It carries out the reaction 5-amino-1-(5-phospho-beta-D-ribosyl)imidazole + S-adenosyl-L-methionine = 4-amino-2-methyl-5-(phosphooxymethyl)pyrimidine + CO + 5'-deoxyadenosine + formate + L-methionine + 3 H(+). The protein operates within cofactor biosynthesis; thiamine diphosphate biosynthesis. In terms of biological role, catalyzes the synthesis of the hydroxymethylpyrimidine phosphate (HMP-P) moiety of thiamine from aminoimidazole ribotide (AIR) in a radical S-adenosyl-L-methionine (SAM)-dependent reaction. The chain is Phosphomethylpyrimidine synthase from Citrobacter koseri (strain ATCC BAA-895 / CDC 4225-83 / SGSC4696).